The sequence spans 384 residues: Guanine nucleotide-binding protein alpha-1 subunit (384 aa).

Glycine 2 carries the N-myristoyl glycine lipid modification. Residue cysteine 5 is the site of S-palmitoyl cysteine attachment. The G-alpha domain occupies 38 to 384 (HIRKLLLLGA…RRNLFEAGLL (347 aa)). The tract at residues 41 to 54 (KLLLLGAGESGKST) is G1 motif. GTP-binding residues include glutamate 49, serine 50, glycine 51, lysine 52, serine 53, threonine 54, aspartate 163, leucine 188, threonine 194, glycine 222, asparagine 288, lysine 289, aspartate 291, and alanine 356. Residue serine 53 coordinates Mg(2+). Residues 186 to 194 (DVLLARVRT) form a G2 motif region. Threonine 194 serves as a coordination point for Mg(2+). A G3 motif region spans residues 215–224 (YRLFDVGGQR). Residues 284 to 291 (MLFLNKFD) form a G4 motif region. A G5 motif region spans residues 354-359 (TTALDQ).

This sequence belongs to the G-alpha family. As to quaternary structure, g proteins are composed of 3 units; alpha, beta and gamma. The alpha chain contains the guanine nucleotide binding site. Mg(2+) is required as a cofactor.

In terms of biological role, guanine nucleotide-binding proteins (G proteins) are involved as modulators or transducers in various transmembrane signaling systems. This chain is Guanine nucleotide-binding protein alpha-1 subunit (GPA1), found in Pisum sativum (Garden pea).